The primary structure comprises 1551 residues: Serine/threonine-protein kinase MRCK gamma (1551 aa).

One can recognise a Protein kinase domain in the interval 71–337 (FEILKVIGRG…LDDFRKHPFF (267 aa)). ATP is bound by residues 77–85 (IGRGAFGEV) and K100. D195 (proton acceptor) is an active-site residue. A phosphoserine; by autocatalysis mark is found at S216 and S228. A Phosphothreonine; by autocatalysis modification is found at T234. The region spanning 338–408 (EGVDWERLAT…TSGSPFDVQS (71 aa)) is the AGC-kinase C-terminal domain. Coiled-coil stretches lie at residues 442-675 (QPQE…TESN) and 729-801 (KARR…QARG). The interval 578-605 (QESSQAKTVHAAPETNGIGSPEGQSQEA) is disordered. The tract at residues 820–886 (TEKDSAKDPG…SHTLRPRSFP (67 aa)) is disordered. Residues 839–849 (AEAELRPEGRR) show a composition bias toward basic and acidic residues. The Phorbol-ester/DAG-type zinc finger occupies 877–926 (SHTLRPRSFPSPTKCLRCTSLMLGLGRQGLGCDTCGYFCHSACASQAPPC). The PH domain maps to 946 to 1065 (GTAYEGFLSV…WLQVLGELQR (120 aa)). The CNH domain occupies 1091–1365 (LPHALCAAVI…RPLNPEGSLF (275 aa)). Residues 1436 to 1449 (ISPPTNFNHLVHVG) enclose the CRIB domain. The tract at residues 1441-1551 (NFNHLVHVGP…PPDPESESSP (111 aa)) is disordered. A compositionally biased stretch (basic and acidic residues) spans 1455–1468 (PNTRDGTRAQEQKS). S1481 carries the post-translational modification Phosphoserine. Polar residues predominate over residues 1511–1527 (TSLSSESVSCPQGSLSP).

It belongs to the protein kinase superfamily. AGC Ser/Thr protein kinase family. DMPK subfamily. In terms of assembly, homodimer and homotetramer via the coiled coil regions. Interacts tightly with GTP-bound but not GDP-bound CDC42. It depends on Mg(2+) as a cofactor.

It is found in the cytoplasm. It catalyses the reaction L-seryl-[protein] + ATP = O-phospho-L-seryl-[protein] + ADP + H(+). The catalysed reaction is L-threonyl-[protein] + ATP = O-phospho-L-threonyl-[protein] + ADP + H(+). With respect to regulation, maintained in an inactive, closed conformation by an interaction between the kinase domain and the negative autoregulatory C-terminal coiled-coil region. Agonist binding to the phorbol ester binding site disrupts this, releasing the kinase domain to allow N-terminus-mediated dimerization and kinase activation by transautophosphorylation. In terms of biological role, may act as a downstream effector of CDC42 in cytoskeletal reorganization. Contributes to the actomyosin contractility required for cell invasion, through the regulation of MYPT1 and thus MLC2 phosphorylation. The protein is Serine/threonine-protein kinase MRCK gamma of Mus musculus (Mouse).